Here is a 182-residue protein sequence, read N- to C-terminus: MATPETRRRPNILVTGSPGTGKSTLGQQVAEKLGFVFIEVSKEVRENNLQGDFDEQYNCHVLDEDKLLDHISDRLDSDEGGIVVDYHGCDLFPERWFDVVVVLRCPTEKLYDRLQSRGYSEFKIKENVECEIFGTLLEEARESYSEDIVHELQSETTEQMEENLERICELAGEFKNEHTMEQ.

The tract at residues 1 to 20 is disordered; the sequence is MATPETRRRPNILVTGSPGT. ATP is bound by residues Gly-19, Gly-21, Lys-22, Ser-23, and Thr-24. The segment at 39-62 is NMPbind; that stretch reads EVSKEVRENNLQGDFDEQYNCHVL. The interval 116–126 is LID; it reads SRGYSEFKIKE. Arg-117 contributes to the ATP binding site.

It belongs to the adenylate kinase family. AK6 subfamily. In terms of assembly, monomer and homodimer. Interacts with small ribosomal subunit protein uS11. Not a structural component of 43S pre-ribosomes, but transiently interacts with them by binding to uS11.

It is found in the cytoplasm. It localises to the nucleus. The enzyme catalyses AMP + ATP = 2 ADP. It carries out the reaction ATP + H2O = ADP + phosphate + H(+). Its function is as follows. Broad-specificity nucleoside monophosphate (NMP) kinase that catalyzes the reversible transfer of the terminal phosphate group between nucleoside triphosphates and monophosphates. Also has ATPase activity. Involved in the late cytoplasmic maturation steps of the 40S ribosomal particles, specifically 18S rRNA maturation. While NMP activity is not required for ribosome maturation, ATPase activity is. Associates transiently with small ribosomal subunit protein uS11. ATP hydrolysis breaks the interaction with uS11. May temporarily remove uS11 from the ribosome to enable a conformational change of the ribosomal RNA that is needed for the final maturation step of the small ribosomal subunit. Its NMP activity may have a role in nuclear energy homeostasis. AMP and dAMP are the preferred substrates, but CMP and TMP are also good substrates. ATP and dATP are the best phosphate donors. This is Adenylate kinase isoenzyme 6 homolog from Caenorhabditis elegans.